Consider the following 98-residue polypeptide: Co-chaperonin GroES 1 (98 aa).

This sequence belongs to the GroES chaperonin family. In terms of assembly, heptamer of 7 subunits arranged in a ring. Interacts with the chaperonin GroEL.

The protein resides in the cytoplasm. Together with the chaperonin GroEL, plays an essential role in assisting protein folding. The GroEL-GroES system forms a nano-cage that allows encapsulation of the non-native substrate proteins and provides a physical environment optimized to promote and accelerate protein folding. GroES binds to the apical surface of the GroEL ring, thereby capping the opening of the GroEL channel. This Rhizobium meliloti (strain 1021) (Ensifer meliloti) protein is Co-chaperonin GroES 1.